Consider the following 253-residue polypeptide: Protein PET20, mitochondrial (253 aa).

A mitochondrion-targeting transit peptide spans 1 to 36; that stretch reads MLKLARPFIPPLSRNNAISSGIVLTSRRFQSSFTFL. A disordered region spans residues 44-93; the sequence is KNQMKSKRKKGSKKAAYHRQPPEHEHTAPLIKQNKTITKKEHSDVRGSHL. Residues 47–60 show a composition bias toward basic residues; sequence MKSKRKKGSKKAAY. Residues 81–90 show a composition bias toward basic and acidic residues; it reads TKKEHSDVRG.

Its subcellular location is the mitochondrion. Functionally, required for respiratory growth, stability of the mitochondrial genome and for proper assembly or maintenance of mitochondrial proteins. The sequence is that of Protein PET20, mitochondrial (PET20) from Saccharomyces cerevisiae (strain ATCC 204508 / S288c) (Baker's yeast).